A 308-amino-acid chain; its full sequence is Glucan 1,3-beta-glucosidase ARB_02797 (308 aa).

An N-terminal signal peptide occupies residues 1 to 20 (MRFSTALSLALAVSPAAVFA). The Proton donor role is filled by glutamate 120. Asparagine 126 carries an N-linked (GlcNAc...) asparagine glycan. Residue glutamate 220 is the Nucleophile of the active site.

This sequence belongs to the glycosyl hydrolase 17 family.

Its subcellular location is the secreted. The protein localises to the cell wall. It localises to the cytoplasm. It carries out the reaction Successive hydrolysis of beta-D-glucose units from the non-reducing ends of (1-&gt;3)-beta-D-glucans, releasing alpha-glucose.. Cell wall glucan 1,3-beta-glucosidase involved in cell wall biosynthesis and virulence. Crucial for delivery of beta-1,3-glucan to the biofilm matrix and for accumulation of mature matrix biomass. The sequence is that of Glucan 1,3-beta-glucosidase ARB_02797 from Arthroderma benhamiae (strain ATCC MYA-4681 / CBS 112371) (Trichophyton mentagrophytes).